Consider the following 526-residue polypeptide: Methyltetrahydroprotoberberine 14-monooxygenase (526 aa).

A helical transmembrane segment spans residues 14–34 (LLLQYLQPISVALVVIALVWN). Cys468 lines the heme pocket.

Belongs to the cytochrome P450 family. Heme is required as a cofactor. In terms of tissue distribution, mainly expressed in roots, and barely in stems, leaves and carpels.

Its subcellular location is the membrane. It catalyses the reaction (S)-cis-N-methylcanadine + reduced [NADPH--hemoprotein reductase] + O2 = allocryptopine + oxidized [NADPH--hemoprotein reductase] + H2O + 2 H(+). The enzyme catalyses (S)-cis-N-methylstylopine + reduced [NADPH--hemoprotein reductase] + O2 = protopine + oxidized [NADPH--hemoprotein reductase] + H2O + 2 H(+). The catalysed reaction is (S)-cis-N-methyltetrahydrothalifendine + reduced [NADPH--hemoprotein reductase] + O2 = 7-hydroxy-8-methoxy-11-methyl-17,19-dioxa-11-azatetracyclo[12.7.0.0(4,9).0(16,20)]henicosa-1(21),4(9),5,7,14,16(20)-hexaen-2-one + oxidized [NADPH--hemoprotein reductase] + H2O + 2 H(+). It carries out the reaction (S)-cis-N-methyltetrahydropalmatine + reduced [NADPH--hemoprotein reductase] + O2 = muramine + oxidized [NADPH--hemoprotein reductase] + H2O + 2 H(+). It functions in the pathway alkaloid biosynthesis. With respect to regulation, repressed by cytochrome P450 inhibitors ketoconazole, metyrapone, prochloraz, ancymidol and cytochrome C. Functionally, involved in the biosynthesis of the isoquinoline alkaloid sanguinarine. Catalyzes the conversion of N-methylated protoberberine alkaloids N-methylstylopine and N-methylcanadine into protopine and allocryptopine, respectively. Can also use (S)-cis-N-methyltetrahydrothalifendine and (S)-cis-N-methyltetrahydropalmatine as substrates. This chain is Methyltetrahydroprotoberberine 14-monooxygenase, found in Papaver somniferum (Opium poppy).